A 71-amino-acid chain; its full sequence is Translation initiation factor IF-1 (71 aa).

The region spanning 1-71 (MSKDDLIQFT…LTKGRVIHRH (71 aa)) is the S1-like domain.

This sequence belongs to the IF-1 family. Component of the 30S ribosomal translation pre-initiation complex which assembles on the 30S ribosome in the order IF-2 and IF-3, IF-1 and N-formylmethionyl-tRNA(fMet); mRNA recruitment can occur at any time during PIC assembly.

The protein localises to the cytoplasm. In terms of biological role, one of the essential components for the initiation of protein synthesis. Stabilizes the binding of IF-2 and IF-3 on the 30S subunit to which N-formylmethionyl-tRNA(fMet) subsequently binds. Helps modulate mRNA selection, yielding the 30S pre-initiation complex (PIC). Upon addition of the 50S ribosomal subunit IF-1, IF-2 and IF-3 are released leaving the mature 70S translation initiation complex. The chain is Translation initiation factor IF-1 from Rickettsia typhi (strain ATCC VR-144 / Wilmington).